A 378-amino-acid chain; its full sequence is Chaperone protein DnaJ (378 aa).

The J domain occupies Asp5–Gly70. Residues Gly133 to Ser211 form a CR-type zinc finger. Zn(2+) is bound by residues Cys146, Cys149, Cys163, Cys166, Cys185, Cys188, Cys199, and Cys202. 4 CXXCXGXG motif repeats span residues Cys146 to Gly153, Cys163 to Gly170, Cys185 to Gly192, and Cys199 to Gly206.

It belongs to the DnaJ family. As to quaternary structure, homodimer. Zn(2+) serves as cofactor.

It is found in the cytoplasm. Participates actively in the response to hyperosmotic and heat shock by preventing the aggregation of stress-denatured proteins and by disaggregating proteins, also in an autonomous, DnaK-independent fashion. Unfolded proteins bind initially to DnaJ; upon interaction with the DnaJ-bound protein, DnaK hydrolyzes its bound ATP, resulting in the formation of a stable complex. GrpE releases ADP from DnaK; ATP binding to DnaK triggers the release of the substrate protein, thus completing the reaction cycle. Several rounds of ATP-dependent interactions between DnaJ, DnaK and GrpE are required for fully efficient folding. Also involved, together with DnaK and GrpE, in the DNA replication of plasmids through activation of initiation proteins. In Shewanella sediminis (strain HAW-EB3), this protein is Chaperone protein DnaJ.